Consider the following 733-residue polypeptide: Methionine--tRNA ligase (733 aa).

Residues 11–21 carry the 'HIGH' region motif; that stretch reads PYANGPIHAGH. Cys143, Cys146, Cys156, and Cys159 together coordinate Zn(2+). A 'KMSKS' region motif is present at residues 345–349; the sequence is KFSTS. Thr348 is a binding site for ATP. The tRNA-binding domain occupies 633 to 733; it reads DFMKLDLRVG…KEVKLGARIR (101 aa).

Belongs to the class-I aminoacyl-tRNA synthetase family. MetG type 1 subfamily. Homodimer. It depends on Zn(2+) as a cofactor.

It localises to the cytoplasm. The catalysed reaction is tRNA(Met) + L-methionine + ATP = L-methionyl-tRNA(Met) + AMP + diphosphate. Is required not only for elongation of protein synthesis but also for the initiation of all mRNA translation through initiator tRNA(fMet) aminoacylation. The chain is Methionine--tRNA ligase from Thermococcus onnurineus (strain NA1).